Here is a 456-residue protein sequence, read N- to C-terminus: tRNA-2-methylthio-N(6)-dimethylallyladenosine synthase (456 aa).

One can recognise an MTTase N-terminal domain in the interval 2–119 (KKVFIKTYGC…LPDLIAARRR (118 aa)). Residues Cys-11, Cys-48, Cys-82, Cys-156, Cys-160, and Cys-163 each contribute to the [4Fe-4S] cluster site. Positions 142–375 (RVDGASAYVS…QATIEENVAR (234 aa)) constitute a Radical SAM core domain. A TRAM domain is found at 378-448 (QGMVGSVQRI…PHSLRGEVAE (71 aa)).

This sequence belongs to the methylthiotransferase family. MiaB subfamily. As to quaternary structure, monomer. Requires [4Fe-4S] cluster as cofactor.

The protein resides in the cytoplasm. The enzyme catalyses N(6)-dimethylallyladenosine(37) in tRNA + (sulfur carrier)-SH + AH2 + 2 S-adenosyl-L-methionine = 2-methylsulfanyl-N(6)-dimethylallyladenosine(37) in tRNA + (sulfur carrier)-H + 5'-deoxyadenosine + L-methionine + A + S-adenosyl-L-homocysteine + 2 H(+). Catalyzes the methylthiolation of N6-(dimethylallyl)adenosine (i(6)A), leading to the formation of 2-methylthio-N6-(dimethylallyl)adenosine (ms(2)i(6)A) at position 37 in tRNAs that read codons beginning with uridine. This Ralstonia pickettii (strain 12J) protein is tRNA-2-methylthio-N(6)-dimethylallyladenosine synthase.